Reading from the N-terminus, the 681-residue chain is DNA-directed RNA polymerase subunit beta' (681 aa).

Zn(2+) is bound by residues Cys69, Cys71, Cys87, and Cys90. Residues Asp489, Asp491, and Asp493 each coordinate Mg(2+).

It belongs to the RNA polymerase beta' chain family. RpoC1 subfamily. In plastids the minimal PEP RNA polymerase catalytic core is composed of four subunits: alpha, beta, beta', and beta''. When a (nuclear-encoded) sigma factor is associated with the core the holoenzyme is formed, which can initiate transcription. Mg(2+) serves as cofactor. Requires Zn(2+) as cofactor.

It localises to the plastid. It is found in the chloroplast. It catalyses the reaction RNA(n) + a ribonucleoside 5'-triphosphate = RNA(n+1) + diphosphate. Functionally, DNA-dependent RNA polymerase catalyzes the transcription of DNA into RNA using the four ribonucleoside triphosphates as substrates. The sequence is that of DNA-directed RNA polymerase subunit beta' from Atropa belladonna (Belladonna).